The primary structure comprises 453 residues: UDP-glycosyltransferase 79B6 (453 aa).

UDP-alpha-D-glucose is bound by residues serine 266, 325–327, 342–350, and 364–367; these read VQQ, HCGFGSMWE, and LGEQ.

The protein belongs to the UDP-glycosyltransferase family.

This Arabidopsis thaliana (Mouse-ear cress) protein is UDP-glycosyltransferase 79B6 (UGT79B6).